A 109-amino-acid chain; its full sequence is MALFFFLLLLISHREQLLLVQGHQMRDLLPTPRNRSNGRLPSPFSRVINPSTHLSIHKKALPRGERKLQDEYALDSRIHSRPDPLWNFRNLQKHSRKGLVMIFSKITRC.

Its subcellular location is the mitochondrion. This is an uncharacterized protein from Arabidopsis thaliana (Mouse-ear cress).